The following is a 210-amino-acid chain: Endo-1,4-beta-xylanase A (210 aa).

The first 19 residues, 1–19 (MKLKKKMLTLLLTASMSFG), serve as a signal peptide directing secretion. Residues 20-210 (LFGATSSAAT…SSGRSNVTVW (191 aa)) form the GH11 domain. The active-site Nucleophile is Glu104. Residue Glu197 is the Proton donor of the active site.

This sequence belongs to the glycosyl hydrolase 11 (cellulase G) family.

It carries out the reaction Endohydrolysis of (1-&gt;4)-beta-D-xylosidic linkages in xylans.. It participates in glycan degradation; xylan degradation. The protein is Endo-1,4-beta-xylanase A (xynA) of Geobacillus stearothermophilus (Bacillus stearothermophilus).